The chain runs to 668 residues: UvrABC system protein B (668 aa).

A Helicase ATP-binding domain is found at 25–413 (NGINTGLQHQ…QNTVQQVIRP (389 aa)). 38 to 45 (GVTGSGKT) lines the ATP pocket. The short motif at 91–114 (YYDYYQPEAYIAASDTYIEKDSSV) is the Beta-hairpin element. Residues 429–595 (QVEDALSEIN…TIIKNIDDML (167 aa)) form the Helicase C-terminal domain. In terms of domain architecture, UVR spans 629 to 664 (TKVIKALEKRMRAYAKELEFEKATTIRDKITEVKQK).

The protein belongs to the UvrB family. Forms a heterotetramer with UvrA during the search for lesions. Interacts with UvrC in an incision complex.

The protein localises to the cytoplasm. Its function is as follows. The UvrABC repair system catalyzes the recognition and processing of DNA lesions. A damage recognition complex composed of 2 UvrA and 2 UvrB subunits scans DNA for abnormalities. Upon binding of the UvrA(2)B(2) complex to a putative damaged site, the DNA wraps around one UvrB monomer. DNA wrap is dependent on ATP binding by UvrB and probably causes local melting of the DNA helix, facilitating insertion of UvrB beta-hairpin between the DNA strands. Then UvrB probes one DNA strand for the presence of a lesion. If a lesion is found the UvrA subunits dissociate and the UvrB-DNA preincision complex is formed. This complex is subsequently bound by UvrC and the second UvrB is released. If no lesion is found, the DNA wraps around the other UvrB subunit that will check the other stand for damage. This is UvrABC system protein B from Francisella tularensis subsp. tularensis (strain SCHU S4 / Schu 4).